Here is a 206-residue protein sequence, read N- to C-terminus: Probable glutathione S-transferase 8 (206 aa).

In terms of domain architecture, GST N-terminal spans 2–79 (VHYKLSYFPI…FLARQFGING (78 aa)). Glutathione-binding positions include tyrosine 8, tryptophan 39, lysine 43, 49-51 (GQL), and 63-64 (QS). Positions 81–206 (CAWEEAQVNS…WLETRPETQF (126 aa)) constitute a GST C-terminal domain.

This sequence belongs to the GST superfamily. Sigma family.

The catalysed reaction is RX + glutathione = an S-substituted glutathione + a halide anion + H(+). In terms of biological role, conjugation of reduced glutathione to a wide number of exogenous and endogenous hydrophobic electrophiles. This Caenorhabditis elegans protein is Probable glutathione S-transferase 8 (gst-8).